The chain runs to 107 residues: Large ribosomal subunit protein uL24 (107 aa).

Belongs to the universal ribosomal protein uL24 family. As to quaternary structure, part of the 50S ribosomal subunit.

In terms of biological role, one of two assembly initiator proteins, it binds directly to the 5'-end of the 23S rRNA, where it nucleates assembly of the 50S subunit. One of the proteins that surrounds the polypeptide exit tunnel on the outside of the subunit. In Natranaerobius thermophilus (strain ATCC BAA-1301 / DSM 18059 / JW/NM-WN-LF), this protein is Large ribosomal subunit protein uL24.